We begin with the raw amino-acid sequence, 817 residues long: Protein EFR3 homolog B (817 aa).

Residues Ser-212, Ser-214, and Ser-216 each carry the phosphoserine modification.

Belongs to the EFR3 family. Component of a phosphatidylinositol 4-kinase (PI4K) complex, composed of PI4KA, EFR3 (EFR3A or EFR3B), TTC7 (TTC7A or TTC7B) and HYCC (HYCC1 or HYCC2). In terms of processing, palmitoylated at its N-terminus, anchoring the protein to the plasma membrane.

The protein localises to the cell membrane. Its subcellular location is the cytoplasm. The protein resides in the cytosol. Its function is as follows. Component of a complex required to localize phosphatidylinositol 4-kinase (PI4K) to the plasma membrane. The complex acts as a regulator of phosphatidylinositol 4-phosphate (PtdIns(4)P) synthesis. In the complex, EFR3B probably acts as the membrane-anchoring component. Also involved in responsiveness to G-protein-coupled receptors; it is however unclear whether this role is direct or indirect. The protein is Protein EFR3 homolog B of Homo sapiens (Human).